The primary structure comprises 679 residues: Protein hook (679 aa).

Residues 6-123 (NEMYYSLLEW…RLLQLVLGCA (118 aa)) form the Calponin-homology (CH) domain. Coiled coils occupy residues 135–437 (EIMC…LKCG) and 480–574 (QTAL…QEIL).

It belongs to the hook family. Homodimer. Interacts with microtubules via its N-terminus.

It is found in the cytoplasm. The protein localises to the cytoskeleton. It localises to the endosome. The protein resides in the synapse. Functionally, involved in endocytic trafficking by stabilizing organelles of the endocytic pathway. Probably acts as a cytoskeletal linker protein required to tether endosome vesicles to the cytoskeleton. Involved in modulation of endocytosis at stages required for down-regulation of membrane proteins that control synapse size. Not involved in synaptic vesicle recycling. Required in R7 cells for boss endocytosis into multivesicular bodies (MVBs). Has a role in regulating adult longevity. The sequence is that of Protein hook from Drosophila simulans (Fruit fly).